Consider the following 431-residue polypeptide: MLVLKTTDQEFSTRFQSLVSDRREATVDVSGTVRDILAHVKAHGDAAVQEYTSRFDHYSPHSHHLSAAFIAEQAAKCSAEVKAAIELAAERISSFHQKQLPQDIGYTDTVGVKLGLNWVALSQVGIYVPGGRASYPSSVLMNALPAKIAGVERIVMTVPMPHGEINPAVLAAAQVAGVTEIYSIGGAQAVGALAYGTETITPVDKIVGPGNAYVAEAKRQVFGTVGIDSIAGPSEILVVADRQNNPEWIAWDLLSQAEHDPSAQSILITDSESFAQQVIGAVEQILTTLPTTKVASSSWQNHGAVIIVRDLAESIPLLNQLAPEHVELCVDNPQLLASQIKCAGSLFLGRYTPEAIGDYLGGPNHVLPTSRSARFASGLSVYDFLKRITYLECNQAALQAIGQSAVTLAETEGLPAHAGSVAVRLQGLNDM.

NAD(+) is bound by residues Tyr127, Gln188, and Asn211. The substrate site is built by Ser234, Gln256, and His259. The Zn(2+) site is built by Gln256 and His259. Catalysis depends on proton acceptor residues Glu324 and His325. Residues His325, Asp358, Glu412, and His417 each contribute to the substrate site. Residue Asp358 coordinates Zn(2+). His417 is a Zn(2+) binding site.

Belongs to the histidinol dehydrogenase family. Zn(2+) serves as cofactor.

It catalyses the reaction L-histidinol + 2 NAD(+) + H2O = L-histidine + 2 NADH + 3 H(+). The protein operates within amino-acid biosynthesis; L-histidine biosynthesis; L-histidine from 5-phospho-alpha-D-ribose 1-diphosphate: step 9/9. Functionally, catalyzes the sequential NAD-dependent oxidations of L-histidinol to L-histidinaldehyde and then to L-histidine. In Trichormus variabilis (strain ATCC 29413 / PCC 7937) (Anabaena variabilis), this protein is Histidinol dehydrogenase 1.